A 671-amino-acid polypeptide reads, in one-letter code: MERLIFTAPLAGLISLTFAAFFAKSILKEDAGNKRMKEIAEAIKEGSTAYMKRQYRTIAVVSVIISLLILFLLDEGLKIAAGFLAGAISSAAAGYIGMSISVRANVRTASAASGGAGKALKIAFRGGAVTGLAVIGLALLGTSSLYILYGDADLVVGFGFGASLISLFARAGGGIFTKAADVGADLVGKIEAGIPEDDPRNPAVIADNVGDNVGDCAGMGADLFETYVVTSLAAMLLGSLIIGTYKNAVLYPLMLGSAAIFASIISVFFVKVEKEGKVMSALYRGVGGSTVLSLIAFYYITGFLMGDSRFFYVTVAGVVITVLMVIVTEYYTSKSCRPVKTIAVSSETGAATNIISGLSAGFESTLVPAVVIAAGILVSYFIVGGSADPGTGLYGIAIASVAMLSTAGMIVALDSYGPITDNAGGIAQMANLPAQVRKVTDELDSVGNTTKAVTKGYAIGSTALGALALFADYRNKVSLESQSISLDSPVVLSGILLGAVLPFLFSAVMMSAVGKAAFEVVNEVRRQFREIPGIMEGTAKPEYGRCVDIVTKAALHDMAMPGFLAVIIPLLTGFFLGPEALAGLLTGLIVVGFMLALMMDNGGGAWDNAKKLIEDGYYGGKGSEAHRAAVVGDTVGDPFKDTAGPALNSLIKVVNMVAILFSPLIIGGGFL.

5 helical membrane passes run 4–24 (LIFTAPLAGLISLTFAAFFAK), 57–77 (TIAVVSVIISLLILFLLDEGL), 79–99 (IAAGFLAGAISSAAAGYIGMS), 128–148 (AVTGLAVIGLALLGTSSLYIL), and 156–176 (VGFGFGASLISLFARAGGGIF). A substrate-binding site is contributed by lysine 178. The Mg(2+) site is built by aspartate 181, aspartate 185, asparagine 208, and aspartate 211. The next 6 membrane-spanning stretches (helical) occupy residues 223–243 (LFETYVVTSLAAMLLGSLIIG), 249–269 (VLYPLMLGSAAIFASIISVFF), 285–305 (GVGGSTVLSLIAFYYITGFLM), 310–330 (FFYVTVAGVVITVLMVIVTEY), 365–385 (TLVPAVVIAAGILVSYFIVGG), and 393–413 (LYGIAIASVAMLSTAGMIVAL). Aspartate 421 lines the Mg(2+) pocket. The next 4 membrane-spanning stretches (helical) occupy residues 452–472 (AVTKGYAIGSTALGALALFAD), 490–510 (VVLSGILLGAVLPFLFSAVMM), 558–578 (MAMPGFLAVIIPLLTGFFLGP), and 579–599 (EALAGLLTGLIVVGFMLALMM). Residues aspartate 607, aspartate 633, and aspartate 637 each coordinate Ca(2+). Lysine 640 contacts substrate. A helical transmembrane segment spans residues 650-670 (LIKVVNMVAILFSPLIIGGGF).

This sequence belongs to the H(+)-translocating pyrophosphatase (TC 3.A.10) family. K(+)-insensitive subfamily. As to quaternary structure, homodimer. Requires Mg(2+) as cofactor.

It is found in the cell membrane. It catalyses the reaction diphosphate + H2O + H(+)(in) = 2 phosphate + 2 H(+)(out). In terms of biological role, proton pump that utilizes the energy of pyrophosphate hydrolysis as the driving force for proton movement across the membrane. Generates a proton motive force. The sequence is that of K(+)-insensitive pyrophosphate-energized proton pump from Methanosarcina mazei (strain ATCC BAA-159 / DSM 3647 / Goe1 / Go1 / JCM 11833 / OCM 88) (Methanosarcina frisia).